We begin with the raw amino-acid sequence, 104 residues long: N(4)-acetylcytidine amidohydrolase (104 aa).

An ASCH domain is found at 6 to 102 (TFYTRFQQDI…ELYVIAFKKV (97 aa)). The active-site Proton acceptor is the K20. Catalysis depends on T23, which acts as the Nucleophile. E73 acts as the Proton donor in catalysis.

Belongs to the N(4)-acetylcytidine amidohydrolase family.

It carries out the reaction N(4)-acetylcytidine + H2O = cytidine + acetate + H(+). The enzyme catalyses N(4)-acetyl-2'-deoxycytidine + H2O = 2'-deoxycytidine + acetate + H(+). The catalysed reaction is N(4)-acetylcytosine + H2O = cytosine + acetate + H(+). In terms of biological role, catalyzes the hydrolysis of N(4)-acetylcytidine (ac4C). This Cronobacter sakazakii (strain ATCC BAA-894) (Enterobacter sakazakii) protein is N(4)-acetylcytidine amidohydrolase.